The following is a 1297-amino-acid chain: Phosphoribosylformylglycinamidine synthase (1297 aa).

Positions 304–323 (PFPGAATGSGGEIRDEGATG) are disordered. Residues 307–318 (GAATGSGGEIRD) and Ala678 each bind ATP. Asp679, Glu718, Asn722, and Asp886 together coordinate Mg(2+). Ser888 contacts ATP. The Glutamine amidotransferase type-1 domain occupies 1043–1297 (RIAILREQGV…LFQNARVALG (255 aa)). The active-site Nucleophile is the Cys1137. Residues His1262 and Glu1264 contribute to the active site.

This sequence in the N-terminal section; belongs to the FGAMS family. Monomer.

Its subcellular location is the cytoplasm. The enzyme catalyses N(2)-formyl-N(1)-(5-phospho-beta-D-ribosyl)glycinamide + L-glutamine + ATP + H2O = 2-formamido-N(1)-(5-O-phospho-beta-D-ribosyl)acetamidine + L-glutamate + ADP + phosphate + H(+). Its pathway is purine metabolism; IMP biosynthesis via de novo pathway; 5-amino-1-(5-phospho-D-ribosyl)imidazole from N(2)-formyl-N(1)-(5-phospho-D-ribosyl)glycinamide: step 1/2. In terms of biological role, phosphoribosylformylglycinamidine synthase involved in the purines biosynthetic pathway. Catalyzes the ATP-dependent conversion of formylglycinamide ribonucleotide (FGAR) and glutamine to yield formylglycinamidine ribonucleotide (FGAM) and glutamate. In Histophilus somni (strain 129Pt) (Haemophilus somnus), this protein is Phosphoribosylformylglycinamidine synthase.